A 480-amino-acid chain; its full sequence is UDP-glucose 6-dehydrogenase 4 (480 aa).

Residues 8–13, Asp33, Arg38, 86–90, 127–128, and Glu161 each bind NAD(+); these read GAGYVG, VNTPT, and ST. Substrate contacts are provided by residues 157-161, 216-223, and 256-269; these read EFLAE, KLAANAFL, and RIGP…VGFG. Cys272 serves as the catalytic Nucleophile. 272-275 provides a ligand contact to NAD(+); that stretch reads CFQK. 334–335 is a substrate binding site; sequence FK. Position 342 (Arg342) interacts with NAD(+). Position 393 is a phosphoserine (Ser393). Arg447 serves as a coordination point for substrate.

This sequence belongs to the UDP-glucose/GDP-mannose dehydrogenase family.

It catalyses the reaction UDP-alpha-D-glucose + 2 NAD(+) + H2O = UDP-alpha-D-glucuronate + 2 NADH + 3 H(+). It participates in nucleotide-sugar biosynthesis; UDP-alpha-D-glucuronate biosynthesis; UDP-alpha-D-glucuronate from UDP-alpha-D-glucose: step 1/1. In terms of biological role, involved in the biosynthesis of UDP-glucuronic acid (UDP-GlcA), providing nucleotide sugars for cell-wall polymers. This Oryza sativa subsp. japonica (Rice) protein is UDP-glucose 6-dehydrogenase 4 (UGD4).